We begin with the raw amino-acid sequence, 261 residues long: Membrane protein insertase MisCA (261 aa).

An N-terminal signal peptide occupies residues 1 to 22 (MLLKRRIGLLLSMVGVFMLLAG). Cys23 is lipidated: N-palmitoyl cysteine. Cys23 carries S-diacylglycerol cysteine lipidation. 5 helical membrane passes run 61–81 (YGLS…PLMI), 131–151 (LAGC…YHAI), 174–194 (YILP…MMAG), 204–224 (MMLW…PAAL), and 225–245 (SLYW…IKGP).

The protein belongs to the OXA1/ALB3/YidC family. Type 2 subfamily. In terms of assembly, mostly monomeric, it may also form dimers. Interacts with SpoIIIAE. Forms a complex with the F(1)F(0) ATP synthase in which can be found the alpha, beta, gamma, delta and epsilon subunits of F(1) and a, b and subunits of F(0). YqgA is found in the same complex.

The protein resides in the cell membrane. Functionally, required for the insertion and/or proper folding and/or complex formation of integral membrane proteins into the membrane. Involved in integration of membrane proteins that insert both dependently and independently of the Sec translocase complex, as well as at least some lipoproteins. Also involved in protein secretion processes. Essential for sporulation by activating sigma factor SpoIIIG/SigG after engulfment is completed in the prespore, maybe by acting on SpoIIIAE. It has an overlapping, although partly distinct, function compared to YqjG(MisCB). The chain is Membrane protein insertase MisCA (misCA) from Bacillus subtilis (strain 168).